The sequence spans 562 residues: Tripeptidyl-peptidase 1 (562 aa).

A signal peptide spans Met1 to Cys19. The propeptide at Thr20 to Ser194 is removed in mature form. A disulfide bond links Cys111 and Cys122. The region spanning Gly198–Pro562 is the Peptidase S53 domain. A glycan (N-linked (GlcNAc...) asparagine) is linked at Asn209. The N-linked (GlcNAc...) (high mannose) asparagine glycan is linked to Asn221. Catalysis depends on charge relay system residues Glu271 and Asp275. N-linked (GlcNAc...) asparagine glycosylation is found at Asn285, Asn312, and Asn442. 2 disulfide bridges follow: Cys364–Cys525 and Cys521–Cys536. Catalysis depends on Ser474, which acts as the Charge relay system. Positions 516 and 517 each coordinate Ca(2+). Ca(2+)-binding residues include Gly538, Gly540, and Asp542.

As to quaternary structure, monomer. Interacts with CLN5. Interacts with CLN3. Ca(2+) is required as a cofactor. Post-translationally, activated by autocatalytic proteolytical processing upon acidification. N-glycosylation is required for processing and activity.

It is found in the lysosome. The protein resides in the melanosome. It carries out the reaction Release of an N-terminal tripeptide from a polypeptide, but also has endopeptidase activity.. Functionally, lysosomal serine protease with tripeptidyl-peptidase I activity. May act as a non-specific lysosomal peptidase which generates tripeptides from the breakdown products produced by lysosomal proteinases. Requires substrates with an unsubstituted N-terminus. This chain is Tripeptidyl-peptidase 1 (Tpp1), found in Mus musculus (Mouse).